A 129-amino-acid chain; its full sequence is MAKTPTRARKRVKKQVSDGIAHVHASFNNTIVTITDRQGNALSWATSGGSGFRGSRKSTPFAAQVAAERAGEIAKEYGVKNLEVMVKGPGPGRESSIRALNAAGFRITNITDVTPIPHNGCRPPKKRRV.

It belongs to the universal ribosomal protein uS11 family. Part of the 30S ribosomal subunit. Interacts with proteins S7 and S18. Binds to IF-3.

In terms of biological role, located on the platform of the 30S subunit, it bridges several disparate RNA helices of the 16S rRNA. Forms part of the Shine-Dalgarno cleft in the 70S ribosome. This is Small ribosomal subunit protein uS11 from Aeromonas hydrophila subsp. hydrophila (strain ATCC 7966 / DSM 30187 / BCRC 13018 / CCUG 14551 / JCM 1027 / KCTC 2358 / NCIMB 9240 / NCTC 8049).